The primary structure comprises 899 residues: Lipoxygenase 2, chloroplastic (899 aa).

The N-terminal 57 residues, 1 to 57 (MLKPQIHKPHLVNKLPLGTPFIPSHASIASFSTTSLRTLSVQKCYRRYIRYTSSNIK), are a transit peptide targeting the chloroplast. The region spanning 83-203 (ALTAVTVGLL…DNPDKRIFFL (121 aa)) is the PLAT domain. The Lipoxygenase domain maps to 206-899 (SYLPSETPEG…GKGVPYSISI (694 aa)). A disordered region spans residues 252–286 (DPDTDSDMARPVLGGNEHPFPRRCRTGRKMTSTEP). Histidine 557, histidine 562, histidine 749, asparagine 753, and isoleucine 899 together coordinate Fe cation.

It belongs to the lipoxygenase family. Fe cation serves as cofactor. In terms of tissue distribution, confined to glandular trichomes in flowers.

It is found in the plastid. Its subcellular location is the chloroplast. The protein operates within lipid metabolism; oxylipin biosynthesis. Functionally, plant lipoxygenases may be involved in a number of diverse aspects of plant physiology including growth and development, pest resistance, and senescence or responses to wounding. Catalyzes the hydroperoxidation of lipids containing a cis,cis-1,4-pentadiene structure. In Tanacetum cinerariifolium (Dalmatian daisy), this protein is Lipoxygenase 2, chloroplastic.